Here is a 338-residue protein sequence, read N- to C-terminus: Alanine racemase (338 aa).

Residue K33 is the Proton acceptor; specific for D-alanine of the active site. K33 is subject to N6-(pyridoxal phosphate)lysine. R126 provides a ligand contact to substrate. Y236 serves as the catalytic Proton acceptor; specific for L-alanine. Residue M284 participates in substrate binding.

The protein belongs to the alanine racemase family. Pyridoxal 5'-phosphate serves as cofactor.

The enzyme catalyses L-alanine = D-alanine. It functions in the pathway amino-acid biosynthesis; D-alanine biosynthesis; D-alanine from L-alanine: step 1/1. In terms of biological role, catalyzes the interconversion of L-alanine and D-alanine. May also act on other amino acids. In Aquifex aeolicus (strain VF5), this protein is Alanine racemase (alr).